The primary structure comprises 398 residues: Phosphoglycerate kinase (398 aa).

Substrate is bound by residues Asp-21–Asn-23, Arg-36, His-59–Arg-62, Arg-119, and Arg-157. ATP is bound by residues Lys-208, Gly-296, Glu-327, and Gly-354–Ser-357.

It belongs to the phosphoglycerate kinase family. In terms of assembly, monomer.

It localises to the cytoplasm. The enzyme catalyses (2R)-3-phosphoglycerate + ATP = (2R)-3-phospho-glyceroyl phosphate + ADP. The protein operates within carbohydrate degradation; glycolysis; pyruvate from D-glyceraldehyde 3-phosphate: step 2/5. This Streptococcus equi subsp. equi (strain 4047) protein is Phosphoglycerate kinase.